We begin with the raw amino-acid sequence, 814 residues long: Threonine--tRNA ligase 2, cytoplasmic (814 aa).

Positions 2–72 (AAHIAQRLTV…SLREEQERAR (71 aa)) form a coiled coil. A disordered region spans residues 62–142 (RSLREEQERA…GHKQEGPCAP (81 aa)). Composition is skewed to basic and acidic residues over residues 63–72 (SLREEQERAR), 88–102 (EEPK…EKGQ), and 119–137 (GNKK…HKQE). A TGS domain is found at 172 to 234 (KPIKITLADG…EQDSNVELLK (63 aa)). The Nuclear localization signal motif lies at 798 to 804 (KLKTLKK).

This sequence belongs to the class-II aminoacyl-tRNA synthetase family.

Its subcellular location is the cytoplasm. It localises to the nucleus. It catalyses the reaction tRNA(Thr) + L-threonine + ATP = L-threonyl-tRNA(Thr) + AMP + diphosphate + H(+). Functionally, catalyzes the attachment of threonine to tRNA(Thr) in a two-step reaction: threonine is first activated by ATP to form Thr-AMP and then transferred to the acceptor end of tRNA(Thr). Also edits incorrectly charged tRNA(Thr) via its editing domain, at the post-transfer stage. The polypeptide is Threonine--tRNA ligase 2, cytoplasmic (tars3) (Xenopus tropicalis (Western clawed frog)).